The following is a 189-amino-acid chain: Peptidyl-tRNA hydrolase (189 aa).

Tyrosine 15 is a tRNA binding site. Histidine 20 (proton acceptor) is an active-site residue. TRNA contacts are provided by phenylalanine 66, asparagine 68, and asparagine 114.

The protein belongs to the PTH family. As to quaternary structure, monomer.

The protein resides in the cytoplasm. It carries out the reaction an N-acyl-L-alpha-aminoacyl-tRNA + H2O = an N-acyl-L-amino acid + a tRNA + H(+). Functionally, hydrolyzes ribosome-free peptidyl-tRNAs (with 1 or more amino acids incorporated), which drop off the ribosome during protein synthesis, or as a result of ribosome stalling. Its function is as follows. Catalyzes the release of premature peptidyl moieties from peptidyl-tRNA molecules trapped in stalled 50S ribosomal subunits, and thus maintains levels of free tRNAs and 50S ribosomes. This Streptococcus equi subsp. zooepidemicus (strain MGCS10565) protein is Peptidyl-tRNA hydrolase.